A 447-amino-acid chain; its full sequence is N-succinylarginine dihydrolase (447 aa).

Residues 19–28, N110, and 137–138 contribute to the substrate site; these read AGLSFGNEAS and HR. E174 is a catalytic residue. Residue R212 coordinates substrate. The active site involves H248. Residues D250 and N359 each coordinate substrate. C365 serves as the catalytic Nucleophile.

This sequence belongs to the succinylarginine dihydrolase family. Homodimer.

It carries out the reaction N(2)-succinyl-L-arginine + 2 H2O + 2 H(+) = N(2)-succinyl-L-ornithine + 2 NH4(+) + CO2. Its pathway is amino-acid degradation; L-arginine degradation via AST pathway; L-glutamate and succinate from L-arginine: step 2/5. Its function is as follows. Catalyzes the hydrolysis of N(2)-succinylarginine into N(2)-succinylornithine, ammonia and CO(2). The protein is N-succinylarginine dihydrolase of Escherichia coli O8 (strain IAI1).